Reading from the N-terminus, the 556-residue chain is Formate--tetrahydrofolate ligase (556 aa).

65 to 72 (TPAGEGKS) lines the ATP pocket.

Belongs to the formate--tetrahydrofolate ligase family.

It catalyses the reaction (6S)-5,6,7,8-tetrahydrofolate + formate + ATP = (6R)-10-formyltetrahydrofolate + ADP + phosphate. The protein operates within one-carbon metabolism; tetrahydrofolate interconversion. The polypeptide is Formate--tetrahydrofolate ligase (Streptococcus pneumoniae (strain Hungary19A-6)).